The following is a 413-amino-acid chain: Inactive squalene synthase 2 (413 aa).

N-acetylglycine is present on glycine 2. 2 helical membrane passes run 283–303 (AIFQ…ALCY) and 390–410 (AIFV…LKAN).

It belongs to the phytoene/squalene synthase family. It depends on Mg(2+) as a cofactor. Mn(2+) serves as cofactor. In terms of tissue distribution, mostly expressed in hypocotyls, leaves and cotyledons, and, to a lower extent, in stems.

Its subcellular location is the endoplasmic reticulum membrane. The polypeptide is Inactive squalene synthase 2 (Arabidopsis thaliana (Mouse-ear cress)).